Reading from the N-terminus, the 350-residue chain is Ion-translocating oxidoreductase complex subunit D (350 aa).

The next 4 helical transmembrane spans lie at 37–57 (YYFG…AYLA), 78–109 (ALVT…IVIV), 124–144 (AMAA…SWVA), and 158–178 (TFNS…HLAI). Threonine 185 carries the FMN phosphoryl threonine modification. 5 helical membrane-spanning segments follow: residues 212 to 232 (SVGE…LVML), 239 to 259 (WHIS…GFLI), 264 to 284 (FVSP…FFIA), 298 to 318 (LIFG…GGYP), and 319 to 339 (DAVA…DYYV).

This sequence belongs to the NqrB/RnfD family. The complex is composed of six subunits: RnfA, RnfB, RnfC, RnfD, RnfE and RnfG. FMN serves as cofactor.

It is found in the cell inner membrane. Functionally, part of a membrane-bound complex that couples electron transfer with translocation of ions across the membrane. This Shewanella frigidimarina (strain NCIMB 400) protein is Ion-translocating oxidoreductase complex subunit D.